The sequence spans 180 residues: Dephospho-CoA kinase (180 aa).

One can recognise a DPCK domain in the interval 2–180; that stretch reads VIGVTGKIGT…VMKLVWEKRE (179 aa). 10–15 provides a ligand contact to ATP; it reads GTGKST.

It belongs to the CoaE family.

It localises to the cytoplasm. It catalyses the reaction 3'-dephospho-CoA + ATP = ADP + CoA + H(+). The protein operates within cofactor biosynthesis; coenzyme A biosynthesis; CoA from (R)-pantothenate: step 5/5. In terms of biological role, catalyzes the phosphorylation of the 3'-hydroxyl group of dephosphocoenzyme A to form coenzyme A. The sequence is that of Dephospho-CoA kinase from Thermotoga maritima (strain ATCC 43589 / DSM 3109 / JCM 10099 / NBRC 100826 / MSB8).